The chain runs to 234 residues: Octanoyltransferase (234 aa).

Residues 35 to 221 (DGAPELVWFL…AFQQVFASPL (187 aa)) form the BPL/LPL catalytic domain. Substrate-binding positions include 74–81 (RGGQYTYH), 150–152 (AIG), and 163–165 (GIS). Cys181 (acyl-thioester intermediate) is an active-site residue.

This sequence belongs to the LipB family.

It localises to the cytoplasm. It catalyses the reaction octanoyl-[ACP] + L-lysyl-[protein] = N(6)-octanoyl-L-lysyl-[protein] + holo-[ACP] + H(+). Its pathway is protein modification; protein lipoylation via endogenous pathway; protein N(6)-(lipoyl)lysine from octanoyl-[acyl-carrier-protein]: step 1/2. Catalyzes the transfer of endogenously produced octanoic acid from octanoyl-acyl-carrier-protein onto the lipoyl domains of lipoate-dependent enzymes. Lipoyl-ACP can also act as a substrate although octanoyl-ACP is likely to be the physiological substrate. In Hyphomonas neptunium (strain ATCC 15444), this protein is Octanoyltransferase.